A 214-amino-acid chain; its full sequence is Thymidylate kinase (214 aa).

10–17 (GGEGAGKS) contributes to the ATP binding site.

This sequence belongs to the thymidylate kinase family.

The enzyme catalyses dTMP + ATP = dTDP + ADP. Its function is as follows. Phosphorylation of dTMP to form dTDP in both de novo and salvage pathways of dTTP synthesis. The sequence is that of Thymidylate kinase from Brucella suis (strain ATCC 23445 / NCTC 10510).